The following is a 336-amino-acid chain: Tyrosine recombinase XerC (336 aa).

Residues 14-106 (VANCRWLGEF…SVKSFYRFLL (93 aa)) enclose the Core-binding (CB) domain. Positions 127 to 330 (KIPDFLSEEE…TFNRLRDAYT (204 aa)) constitute a Tyr recombinase domain. Active-site residues include R183, K207, H282, R285, and H308. Residue Y317 is the O-(3'-phospho-DNA)-tyrosine intermediate of the active site.

This sequence belongs to the 'phage' integrase family. XerC subfamily. In terms of assembly, forms a cyclic heterotetrameric complex composed of two molecules of XerC and two molecules of XerD.

It is found in the cytoplasm. Functionally, site-specific tyrosine recombinase, which acts by catalyzing the cutting and rejoining of the recombining DNA molecules. The XerC-XerD complex is essential to convert dimers of the bacterial chromosome into monomers to permit their segregation at cell division. It also contributes to the segregational stability of plasmids. The polypeptide is Tyrosine recombinase XerC (Chlorobaculum tepidum (strain ATCC 49652 / DSM 12025 / NBRC 103806 / TLS) (Chlorobium tepidum)).